The sequence spans 700 residues: Methionine--tRNA ligase (700 aa).

Positions 13–23 (PYANGDIHLGH) match the 'HIGH' region motif. Residues C144, C147, C157, and C160 each contribute to the Zn(2+) site. The short motif at 341-345 (KMSKS) is the 'KMSKS' region element. K344 contacts ATP. The tract at residues 562–587 (QVGAPTASQDDKAAAKNTSPAAMPSS) is disordered. Over residues 577-587 (KNTSPAAMPSS) the composition is skewed to polar residues. Positions 598 to 700 (DFAKVEMKVA…DEAVIGDSLA (103 aa)) constitute a tRNA-binding domain.

It belongs to the class-I aminoacyl-tRNA synthetase family. MetG type 1 subfamily. In terms of assembly, homodimer. Requires Zn(2+) as cofactor.

Its subcellular location is the cytoplasm. The catalysed reaction is tRNA(Met) + L-methionine + ATP = L-methionyl-tRNA(Met) + AMP + diphosphate. Its function is as follows. Is required not only for elongation of protein synthesis but also for the initiation of all mRNA translation through initiator tRNA(fMet) aminoacylation. This is Methionine--tRNA ligase from Psychrobacter cryohalolentis (strain ATCC BAA-1226 / DSM 17306 / VKM B-2378 / K5).